Consider the following 1002-residue polypeptide: Ephrin type-B receptor 5 (1002 aa).

A signal peptide spans 1 to 29; sequence MDSNADISARRVSGMDWLWLVCFFHLVTS. Topologically, residues 30-564 are extracellular; sequence LEEILLDTTG…AQDRLPLIVG (535 aa). Residues 31–213 enclose the Eph LBD domain; sequence EEILLDTTGE…FFYKCPAVVK (183 aa). 2 consecutive Fibronectin type-III domains span residues 344–452 and 453–548; these read APRD…TSQS and VPSA…TLMA. N446 carries an N-linked (GlcNAc...) asparagine glycan. The chain crosses the membrane as a helical span at residues 565–585; it reads SALGGLAFLVIAAIAILAIIF. The Cytoplasmic segment spans residues 586 to 1002; the sequence is KSKRRETPYT…HLNQLEPVEV (417 aa). In terms of domain architecture, Protein kinase spans 637–900; the sequence is IKIEEVIGSG…QIVSALDKMI (264 aa). ATP-binding positions include 643-651 and K669; that span reads IGSGEFGEV. The active-site Proton acceptor is the D762. A disordered region spans residues 906-928; the sequence is LKATGTGSSRPSQPLLSNSPPDF. The span at 910 to 928 shows a compositional bias: polar residues; it reads GTGSSRPSQPLLSNSPPDF. In terms of domain architecture, SAM spans 929 to 993; it reads PSLSNAHEWL…LNSIQLMKVH (65 aa). Residues 1000–1002 carry the PDZ-binding motif; it reads VEV.

This sequence belongs to the protein kinase superfamily. Tyr protein kinase family. Ephrin receptor subfamily. As to expression, most abundant in thymus and detectable in brain, retina, kidney, lung and heart. Not detected in skeletal muscle and liver.

It is found in the membrane. It catalyses the reaction L-tyrosyl-[protein] + ATP = O-phospho-L-tyrosyl-[protein] + ADP + H(+). Receptor for members of the ephrin-B family. This is Ephrin type-B receptor 5 (EPHB5) from Gallus gallus (Chicken).